The chain runs to 609 residues: Albumin (609 aa).

An N-terminal signal peptide occupies residues 1–18; that stretch reads MKWVTFISLLFLFSSAYS. A propeptide spanning residues 19–24 is cleaved from the precursor; it reads RGVFRR. 3 consecutive Albumin domains span residues 19-210, 211-403, and 404-601; these read RGVF…DELR, DEGK…EFKP, and LVEE…KLVA. Histidine 27 contacts Cu cation. A Phosphoserine; by FAM20C modification is found at serine 29. A Ca(2+)-binding site is contributed by glutamate 30. Lysine 36 carries N-linked (Glc) (glycation) lysine glycosylation. Position 37 (aspartate 37) interacts with Ca(2+). N-linked (Glc) (glycation) lysine; in vitro glycosylation is present at lysine 75. A disulfide bond links cysteine 77 and cysteine 86. 2 positions are modified to phosphoserine; by FAM20C: serine 82 and serine 89. Position 91 (histidine 91) interacts with Zn(2+). 4 disulfide bridges follow: cysteine 99-cysteine 115, cysteine 114-cysteine 125, cysteine 148-cysteine 193, and cysteine 192-cysteine 201. The residue at position 107 (threonine 107) is a Phosphothreonine; by FAM20C. N-linked (Glc) (glycation) lysine; in vitro glycosylation is found at lysine 161 and lysine 186. N-linked (Glc) (glycation) lysine; in vitro glycosylation is present at lysine 223. Intrachain disulfides connect cysteine 224-cysteine 270 and cysteine 269-cysteine 277. N6-succinyllysine is present on lysine 229. N-linked (Glc) (glycation) lysine; in vitro glycosylation is present at lysine 249. Lysine 257 carries an N-linked (Glc) (glycation) lysine glycan. A (4Z,15Z)-bilirubin IXalpha-binding site is contributed by lysine 264. Glutamate 268 lines the Ca(2+) pocket. 2 residues coordinate Zn(2+): histidine 271 and aspartate 273. The Ca(2+) site is built by aspartate 273, glutamate 276, aspartate 279, and aspartate 283. Cystine bridges form between cysteine 289/cysteine 303 and cysteine 302/cysteine 313. The residue at position 297 (serine 297) is a Phosphoserine. Lysine 300 carries an N-linked (Glc) (glycation) lysine; in vitro glycan. N-linked (Glc) (glycation) lysine glycosylation is present at lysine 305. Lysine 337 carries an N-linked (Glc) (glycation) lysine; in vitro glycan. 2 disulfide bridges follow: cysteine 340-cysteine 385 and cysteine 384-cysteine 393. N-linked (Glc) (glycation) lysine glycosylation is present at lysine 341. Residue asparagine 342 is glycosylated (N-linked (GlcNAc...) asparagine; in variant Redhill). Lysine 347 carries N-linked (Glc) (glycation) lysine; in vitro glycosylation. N-linked (Glc) (glycation) lysine glycosylation occurs at lysine 375. Residues lysine 402 and lysine 437 are each glycosylated (N-linked (Glc) (glycation) lysine; in vitro). Cystine bridges form between cysteine 416/cysteine 462, cysteine 461/cysteine 472, cysteine 485/cysteine 501, and cysteine 500/cysteine 511. Serine 443 is subject to Phosphoserine. A phosphothreonine mark is found at threonine 444 and threonine 446. N6-succinyllysine is present on lysine 460. Lysine 463 carries N-linked (Glc) (glycation) lysine glycosylation. An N-linked (Glc) (glycation) lysine; in vitro glycan is attached at lysine 468. The residue at position 513 (serine 513) is a Phosphoserine. Aspartate 518 carries N-linked (GlcNAc...) asparagine; in variant Casebrook glycosylation. Disulfide bonds link cysteine 538–cysteine 583 and cysteine 582–cysteine 591. The residue at position 543 (lysine 543) is an N6-succinyllysine. Lysine 549 carries an N-linked (Glc) (glycation) lysine glycan. N6-methyllysine; alternate is present on lysine 558. The N-linked (Glc) (glycation) lysine; alternate glycan is linked to lysine 558. Lysine 560 and lysine 569 each carry an N-linked (Glc) (glycation) lysine; in vitro glycan. Lysine 588 carries the post-translational modification N6-succinyllysine. An N-linked (Glc) (glycation) lysine; in vitro glycan is attached at lysine 597.

This sequence belongs to the ALB/AFP/VDB family. Interacts with FCGRT; this interaction regulates ALB homeostasis. Interacts with TASOR. In plasma, occurs in a covalently-linked complex with chromophore-bound alpha-1-microglobulin with molar ratio 1:2 and 1:1; this interaction does not prevent fatty acid binding to ALB. In terms of processing, kenitra variant is partially O-glycosylated at Thr-620. It has two new disulfide bonds Cys-600 to Cys-602 and Cys-601 to Cys-606. Post-translationally, glycated in diabetic patients. Phosphorylated by FAM20C in the extracellular medium. In terms of processing, acetylated on Lys-223 by acetylsalicylic acid. As to expression, plasma.

The protein resides in the secreted. Functionally, binds water, Ca(2+), Na(+), K(+), fatty acids, hormones, bilirubin and drugs. Its main function is the regulation of the colloidal osmotic pressure of blood. Major zinc transporter in plasma, typically binds about 80% of all plasma zinc. Major calcium and magnesium transporter in plasma, binds approximately 45% of circulating calcium and magnesium in plasma. Potentially has more than two calcium-binding sites and might additionally bind calcium in a non-specific manner. The shared binding site between zinc and calcium at residue Asp-273 suggests a crosstalk between zinc and calcium transport in the blood. The rank order of affinity is zinc &gt; calcium &gt; magnesium. Binds to the bacterial siderophore enterobactin and inhibits enterobactin-mediated iron uptake of E.coli from ferric transferrin, and may thereby limit the utilization of iron and growth of enteric bacteria such as E.coli. Does not prevent iron uptake by the bacterial siderophore aerobactin. The sequence is that of Albumin (ALB) from Homo sapiens (Human).